The chain runs to 341 residues: L-threonine 3-dehydrogenase (341 aa).

Residue Cys38 participates in Zn(2+) binding. Active-site charge relay system residues include Thr40 and His43. Zn(2+)-binding residues include His63, Glu64, Cys93, Cys96, Cys99, and Cys107. Residues Ile175, Asp195, Arg200, 262–264 (LGI), and 286–287 (IY) each bind NAD(+).

The protein belongs to the zinc-containing alcohol dehydrogenase family. Homotetramer. Zn(2+) is required as a cofactor.

The protein localises to the cytoplasm. It carries out the reaction L-threonine + NAD(+) = (2S)-2-amino-3-oxobutanoate + NADH + H(+). It participates in amino-acid degradation; L-threonine degradation via oxydo-reductase pathway; glycine from L-threonine: step 1/2. Its function is as follows. Catalyzes the NAD(+)-dependent oxidation of L-threonine to 2-amino-3-ketobutyrate. This chain is L-threonine 3-dehydrogenase, found in Serratia proteamaculans (strain 568).